A 466-amino-acid chain; its full sequence is Vacuolar-processing enzyme delta-isozyme (466 aa).

Positions M1–S24 are cleaved as a signal peptide. An N-linked (GlcNAc...) asparagine glycan is attached at N137. Residue H164 is part of the active site. The active-site Nucleophile is the C206. A disulfide bond links C239 and C253. N322 is a glycosylation site (N-linked (GlcNAc...) asparagine). 2 cysteine pairs are disulfide-bonded: C417–C447 and C429–C464.

This sequence belongs to the peptidase C13 family. Auto-catalytic activation. As to expression, seed specific. Restricted to developing seeds at 7 days after anthesis, and, at lower levels, detected in flowers. Detected in siliques, specifically in seed coats (at protein level).

It is found in the secreted. Its subcellular location is the extracellular space. The protein resides in the cell wall. It localises to the vacuole. It catalyses the reaction Hydrolysis of proteins and small molecule substrates at -Asn-|-Xaa- bonds.. Strongly inhibited by biotin-YVAD-fmk (a caspase-1 inhibitor) and by Ac-DEVD-fmk. Functionally, asparagine-specific endopeptidase that may be involved in processing of proteins targeted to vacuoles. Probably involved in post-translational proteolysis of seed storage proteins in the protein storage vacuole of developing seeds. Exhibits a caspase-1-like activity in extracellular granules. At the early stage of seed development, required for the formation of the seed coat, by regulating cell death of specific cell layers in inner integument. The protein is Vacuolar-processing enzyme delta-isozyme of Arabidopsis thaliana (Mouse-ear cress).